The primary structure comprises 146 residues: UPF0735 ACT domain-containing protein Cphy_3604 (146 aa).

Residues T70–R145 enclose the ACT domain.

The protein belongs to the UPF0735 family.

The sequence is that of UPF0735 ACT domain-containing protein Cphy_3604 from Lachnoclostridium phytofermentans (strain ATCC 700394 / DSM 18823 / ISDg) (Clostridium phytofermentans).